The chain runs to 169 residues: 6,7-dimethyl-8-ribityllumazine synthase (169 aa).

Residues Tyr30, Ala61–Glu63, and Cys90–Ile92 contribute to the 5-amino-6-(D-ribitylamino)uracil site. Glu95–Thr96 contributes to the (2S)-2-hydroxy-3-oxobutyl phosphate binding site. Residue His98 is the Proton donor of the active site. Asn123 is a binding site for 5-amino-6-(D-ribitylamino)uracil. (2S)-2-hydroxy-3-oxobutyl phosphate is bound at residue Arg137.

The protein belongs to the DMRL synthase family.

The enzyme catalyses (2S)-2-hydroxy-3-oxobutyl phosphate + 5-amino-6-(D-ribitylamino)uracil = 6,7-dimethyl-8-(1-D-ribityl)lumazine + phosphate + 2 H2O + H(+). The protein operates within cofactor biosynthesis; riboflavin biosynthesis; riboflavin from 2-hydroxy-3-oxobutyl phosphate and 5-amino-6-(D-ribitylamino)uracil: step 1/2. Its function is as follows. Catalyzes the formation of 6,7-dimethyl-8-ribityllumazine by condensation of 5-amino-6-(D-ribitylamino)uracil with 3,4-dihydroxy-2-butanone 4-phosphate. This is the penultimate step in the biosynthesis of riboflavin. The chain is 6,7-dimethyl-8-ribityllumazine synthase from Methylorubrum populi (strain ATCC BAA-705 / NCIMB 13946 / BJ001) (Methylobacterium populi).